We begin with the raw amino-acid sequence, 340 residues long: tRNA N6-adenosine threonylcarbamoyltransferase (340 aa).

His115 and His119 together coordinate Fe cation. Residues 138 to 142 (VVSGG), Asp171, Gly184, Asp188, and Asn278 each bind substrate. Asp306 contacts Fe cation.

This sequence belongs to the KAE1 / TsaD family. It depends on Fe(2+) as a cofactor.

Its subcellular location is the cytoplasm. The enzyme catalyses L-threonylcarbamoyladenylate + adenosine(37) in tRNA = N(6)-L-threonylcarbamoyladenosine(37) in tRNA + AMP + H(+). Functionally, required for the formation of a threonylcarbamoyl group on adenosine at position 37 (t(6)A37) in tRNAs that read codons beginning with adenine. Is involved in the transfer of the threonylcarbamoyl moiety of threonylcarbamoyl-AMP (TC-AMP) to the N6 group of A37, together with TsaE and TsaB. TsaD likely plays a direct catalytic role in this reaction. The sequence is that of tRNA N6-adenosine threonylcarbamoyltransferase from Clostridium botulinum (strain Hall / ATCC 3502 / NCTC 13319 / Type A).